A 247-amino-acid chain; its full sequence is MMDPIHQFNIETIFTIGHIGGQEIAFTNSSAYMLVAVVLTSLLMLATGRKLVPGRMQSIAEISYEFVADTIHTTAGKDGMKFFPFVFTIFMLVTVSNLVGIVPYTFTISSHIIVTAALAFLVFFTVLIYGFYKNGLRFFKLFVPSGIPIVILPLVVAIEVISFLSRPVSHSVRLFANMLAGHITLKVFASFVTMLGAMGIVGVFGAVLPLALVVALTALELLVAFLQAYVFTILTCIYINDAIHPGH.

Helical transmembrane passes span 24–44 (IAFT…SLLM), 82–102 (FFPF…VGIV), 112–132 (IIVT…YGFY), 141–161 (LFVP…IEVI), 194–214 (MLGA…ALVV), and 219–239 (LELL…CIYI).

This sequence belongs to the ATPase A chain family. In terms of assembly, F-type ATPases have 2 components, CF(1) - the catalytic core - and CF(0) - the membrane proton channel. CF(1) has five subunits: alpha(3), beta(3), gamma(1), delta(1), epsilon(1). CF(0) has three main subunits: a(1), b(2) and c(9-12). The alpha and beta chains form an alternating ring which encloses part of the gamma chain. CF(1) is attached to CF(0) by a central stalk formed by the gamma and epsilon chains, while a peripheral stalk is formed by the delta and b chains.

Its subcellular location is the cell inner membrane. In terms of biological role, key component of the proton channel; it plays a direct role in the translocation of protons across the membrane. This Nitrobacter hamburgensis (strain DSM 10229 / NCIMB 13809 / X14) protein is ATP synthase subunit a.